Here is a 160-residue protein sequence, read N- to C-terminus: MGVTKKPDLNDPVLRAKLAKGMGHNYYGEPAWPNDLLYIFPVVILGTIACNVGLAVLEPSMIGEPADPFATPLEILPEWYFFPVFQILRTVPNKLLGVLLMVSVPAGLLTVPFLENVNKFQNPFRRPVATTVFLIGTAVALWLGIGATLPIDKSLTLGLF.

A run of 3 helical transmembrane segments spans residues 36 to 56 (LLYI…GLAV), 95 to 115 (LLGV…PFLE), and 131 to 151 (TVFL…TLPI).

It belongs to the cytochrome b family. PetD subfamily. As to quaternary structure, the 4 large subunits of the cytochrome b6-f complex are cytochrome b6, subunit IV (17 kDa polypeptide, petD), cytochrome f and the Rieske protein, while the 4 small subunits are petG, petL, petM and petN. The complex functions as a dimer.

The protein resides in the plastid. It is found in the chloroplast thylakoid membrane. Component of the cytochrome b6-f complex, which mediates electron transfer between photosystem II (PSII) and photosystem I (PSI), cyclic electron flow around PSI, and state transitions. The protein is Cytochrome b6-f complex subunit 4 of Morus indica (Mulberry).